The primary structure comprises 167 residues: RNA pyrophosphohydrolase (167 aa).

Residues 7 to 160 enclose the Nudix hydrolase domain; it reads PYRPCVGVMV…KRRAYEEVVA (154 aa). A Nudix box motif is present at residues 48–69; sequence GGIDEGEDPLEAACRELYEETG.

The protein belongs to the Nudix hydrolase family. RppH subfamily. A divalent metal cation serves as cofactor.

Functionally, accelerates the degradation of transcripts by removing pyrophosphate from the 5'-end of triphosphorylated RNA, leading to a more labile monophosphorylated state that can stimulate subsequent ribonuclease cleavage. The sequence is that of RNA pyrophosphohydrolase from Rhizobium meliloti (strain 1021) (Ensifer meliloti).